The chain runs to 91 residues: UPF0512 protein F (91 aa).

Belongs to the UPF0512 family.

The polypeptide is UPF0512 protein F (Dictyostelium discoideum (Social amoeba)).